The primary structure comprises 431 residues: Histidinol dehydrogenase (431 aa).

3 residues coordinate NAD(+): Y124, Q187, and N210. Positions 236, 258, and 261 each coordinate substrate. The Zn(2+) site is built by Q258 and H261. Active-site proton acceptor residues include E325 and H326. H326, D359, E413, and H418 together coordinate substrate. D359 contacts Zn(2+). H418 is a Zn(2+) binding site.

This sequence belongs to the histidinol dehydrogenase family. Requires Zn(2+) as cofactor.

It catalyses the reaction L-histidinol + 2 NAD(+) + H2O = L-histidine + 2 NADH + 3 H(+). It participates in amino-acid biosynthesis; L-histidine biosynthesis; L-histidine from 5-phospho-alpha-D-ribose 1-diphosphate: step 9/9. Catalyzes the sequential NAD-dependent oxidations of L-histidinol to L-histidinaldehyde and then to L-histidine. In Legionella pneumophila (strain Paris), this protein is Histidinol dehydrogenase.